A 216-amino-acid polypeptide reads, in one-letter code: Phosphatidylserine decarboxylase proenzyme (216 aa).

Serine 182 acts as the Schiff-base intermediate with substrate; via pyruvic acid in catalysis. A Pyruvic acid (Ser); by autocatalysis modification is found at serine 182.

This sequence belongs to the phosphatidylserine decarboxylase family. PSD-A subfamily. Heterodimer of a large membrane-associated beta subunit and a small pyruvoyl-containing alpha subunit. Pyruvate is required as a cofactor. Is synthesized initially as an inactive proenzyme. Formation of the active enzyme involves a self-maturation process in which the active site pyruvoyl group is generated from an internal serine residue via an autocatalytic post-translational modification. Two non-identical subunits are generated from the proenzyme in this reaction, and the pyruvate is formed at the N-terminus of the alpha chain, which is derived from the carboxyl end of the proenzyme. The post-translation cleavage follows an unusual pathway, termed non-hydrolytic serinolysis, in which the side chain hydroxyl group of the serine supplies its oxygen atom to form the C-terminus of the beta chain, while the remainder of the serine residue undergoes an oxidative deamination to produce ammonia and the pyruvoyl prosthetic group on the alpha chain.

It is found in the cell membrane. The catalysed reaction is a 1,2-diacyl-sn-glycero-3-phospho-L-serine + H(+) = a 1,2-diacyl-sn-glycero-3-phosphoethanolamine + CO2. It functions in the pathway phospholipid metabolism; phosphatidylethanolamine biosynthesis; phosphatidylethanolamine from CDP-diacylglycerol: step 2/2. Functionally, catalyzes the formation of phosphatidylethanolamine (PtdEtn) from phosphatidylserine (PtdSer). This chain is Phosphatidylserine decarboxylase proenzyme, found in Burkholderia mallei (strain NCTC 10247).